A 143-amino-acid chain; its full sequence is Adrenodoxin, mitochondrial (143 aa).

The N-terminal 19 residues, 1–19, are a transit peptide targeting the mitochondrion; it reads CSAVAVRTLRPLSLSARAA. Positions 26–130 constitute a 2Fe-2S ferredoxin-type domain; sequence ITVHFINRDG…NMTVRVPEAV (105 aa). 4 residues coordinate [2Fe-2S] cluster: Cys-65, Cys-71, Cys-74, and Cys-111.

The protein belongs to the adrenodoxin/putidaredoxin family. [2Fe-2S] cluster is required as a cofactor.

Its subcellular location is the mitochondrion matrix. Functionally, essential for the synthesis of various steroid hormones. Participates in the reduction of mitochondrial cytochrome P450 for steroidogenesis. Transfers electrons from adrenodoxin reductase to CYP11A1, a cytochrome P450 that catalyzes cholesterol side-chain cleavage. Does not form a ternary complex with adrenodoxin reductase and CYP11A1 but shuttles between the two enzymes to transfer electrons. The sequence is that of Adrenodoxin, mitochondrial (FDX1) from Gallus gallus (Chicken).